We begin with the raw amino-acid sequence, 508 residues long: ATP synthase subunit alpha, chloroplastic (508 aa).

Position 171 to 178 (Gly-171 to Thr-178) interacts with ATP.

It belongs to the ATPase alpha/beta chains family. As to quaternary structure, F-type ATPases have 2 components, CF(1) - the catalytic core - and CF(0) - the membrane proton channel. CF(1) has five subunits: alpha(3), beta(3), gamma(1), delta(1), epsilon(1). CF(0) has four main subunits: a, b, b' and c.

Its subcellular location is the plastid. It localises to the chloroplast thylakoid membrane. The enzyme catalyses ATP + H2O + 4 H(+)(in) = ADP + phosphate + 5 H(+)(out). Functionally, produces ATP from ADP in the presence of a proton gradient across the membrane. The alpha chain is a regulatory subunit. This Gnetum parvifolium (Small-leaved jointfir) protein is ATP synthase subunit alpha, chloroplastic.